Reading from the N-terminus, the 345-residue chain is Phosphoribosylformylglycinamidine cyclo-ligase (345 aa).

Belongs to the AIR synthase family.

It is found in the cytoplasm. It carries out the reaction 2-formamido-N(1)-(5-O-phospho-beta-D-ribosyl)acetamidine + ATP = 5-amino-1-(5-phospho-beta-D-ribosyl)imidazole + ADP + phosphate + H(+). It functions in the pathway purine metabolism; IMP biosynthesis via de novo pathway; 5-amino-1-(5-phospho-D-ribosyl)imidazole from N(2)-formyl-N(1)-(5-phospho-D-ribosyl)glycinamide: step 2/2. In Shewanella sp. (strain ANA-3), this protein is Phosphoribosylformylglycinamidine cyclo-ligase.